A 128-amino-acid chain; its full sequence is Aspartate 1-decarboxylase (128 aa).

The Schiff-base intermediate with substrate; via pyruvic acid role is filled by Ser-25. Ser-25 is subject to Pyruvic acid (Ser). Thr-57 provides a ligand contact to substrate. Residue Tyr-58 is the Proton donor of the active site. 73–75 (GSA) is a substrate binding site.

The protein belongs to the PanD family. As to quaternary structure, heterooctamer of four alpha and four beta subunits. The cofactor is pyruvate. Post-translationally, is synthesized initially as an inactive proenzyme, which is activated by self-cleavage at a specific serine bond to produce a beta-subunit with a hydroxyl group at its C-terminus and an alpha-subunit with a pyruvoyl group at its N-terminus.

Its subcellular location is the cytoplasm. The enzyme catalyses L-aspartate + H(+) = beta-alanine + CO2. The protein operates within cofactor biosynthesis; (R)-pantothenate biosynthesis; beta-alanine from L-aspartate: step 1/1. Functionally, catalyzes the pyruvoyl-dependent decarboxylation of aspartate to produce beta-alanine. This chain is Aspartate 1-decarboxylase, found in Paraburkholderia phymatum (strain DSM 17167 / CIP 108236 / LMG 21445 / STM815) (Burkholderia phymatum).